The chain runs to 667 residues: MFVGTLVIIICTTLIIIIKKILKRKKEKLNLKESKKKKQDNERKNFEGLLTKKRVEVGDLKKEIEKLNKDKIELAKKLNCYIGDSSIPANGIREYDIIIDIPSVDYLSQSRKSWIIYVSNQLKQKMGSSNYNKKRPLHSLLKEYKKFSTLACLGVLNKGKTFFINKYNGTYLPSGTQAQTIGLSLSISSLNETITIDTAGSNTALQVCEDKTEEHLARKESTEMFICDMSFSLASIIVYVLNELTWNDQRFILALQSKIQSLRSESNIIKKLLVVHNYPKVNSQEELLSEIKTYIESPFNGNFHHHHVDIKKIESKEEIVLFFVESVNKTHHFFLCNDNSEFGKRYNQLTIEKIRTYKNYNDNLDLDKVLLTSLQNNMIPYCKSPKKLKITEHEPTINQINNNNSSNNKSQLEERPIADSLFQTQSFLHPSIDDTIQDNDKSGSEVSTPTISSSSSSPLQPIIKDEKDDNIENKSDEANTSLKYKPLFTSFGTDEYSKHLKELCKLHQMVSPHRSSIKQIPAFTISPEIDCNRENDFKLIANRIEIIGLNMVFSSGFKPFHDIVKVNSDLRYIIEVPQLEMEDIEFETKHLGSQWYLNIKGIKKLRYDSNDQTTVYPSNLTSLCPSQNQRRDGLFEFSLPIPTEYLPIKPAVSLDKGVITFKFEKIG.

The next 2 helical transmembrane spans lie at 2-22 (FVGT…KKIL) and 224-244 (MFIC…LNEL). A coiled-coil region spans residues 18–82 (IKKILKRKKE…ELAKKLNCYI (65 aa)). The disordered stretch occupies residues 432–478 (IDDTIQDNDKSGSEVSTPTISSSSSSPLQPIIKDEKDDNIENKSDEA). A compositionally biased stretch (low complexity) spans 444–457 (SEVSTPTISSSSSS). Basic and acidic residues predominate over residues 463–477 (IKDEKDDNIENKSDE). One can recognise a sHSP domain in the interval 551-667 (MVFSSGFKPF…VITFKFEKIG (117 aa)).

It belongs to the small heat shock protein (HSP20) family.

It is found in the membrane. This chain is Heat shock protein DDB_G0283913, found in Dictyostelium discoideum (Social amoeba).